Consider the following 248-residue polypeptide: NADH dehydrogenase [ubiquinone] flavoprotein 2, mitochondrial (248 aa).

The transit peptide at 1–31 directs the protein to the mitochondrion; it reads MFSLALRARASGLTAQWGRHARNLHKTAVQN. Positions 134, 139, 175, and 179 each coordinate [2Fe-2S] cluster. Y192 carries the post-translational modification Phosphotyrosine; by SRC. Residues 229-248 form a disordered region; it reads GLTSLTEPPKGPGFGVQAGL.

Belongs to the complex I 24 kDa subunit family. Core subunit of respiratory chain NADH dehydrogenase (Complex I) which is composed of 45 different subunits. This is a component of the flavoprotein-sulfur (FP) fragment of the enzyme. [2Fe-2S] cluster serves as cofactor.

It localises to the mitochondrion inner membrane. It carries out the reaction a ubiquinone + NADH + 5 H(+)(in) = a ubiquinol + NAD(+) + 4 H(+)(out). Its function is as follows. Core subunit of the mitochondrial membrane respiratory chain NADH dehydrogenase (Complex I) which catalyzes electron transfer from NADH through the respiratory chain, using ubiquinone as an electron acceptor. Parts of the peripheral arm of the enzyme, where the electrons from NADH are accepted by flavin mononucleotide (FMN) and then passed along a chain of iron-sulfur clusters by electron tunnelling to the final acceptor ubiquinone. Contains one iron-sulfur cluster. The polypeptide is NADH dehydrogenase [ubiquinone] flavoprotein 2, mitochondrial (Rattus norvegicus (Rat)).